The sequence spans 451 residues: Phosphoglucosamine mutase (451 aa).

Ser101 acts as the Phosphoserine intermediate in catalysis. The Mg(2+) site is built by Ser101, Asp240, Asp242, and Asp244. Ser101 carries the phosphoserine modification.

This sequence belongs to the phosphohexose mutase family. The cofactor is Mg(2+). Post-translationally, activated by phosphorylation.

The enzyme catalyses alpha-D-glucosamine 1-phosphate = D-glucosamine 6-phosphate. Catalyzes the conversion of glucosamine-6-phosphate to glucosamine-1-phosphate. In Streptococcus pyogenes serotype M12 (strain MGAS2096), this protein is Phosphoglucosamine mutase.